Consider the following 512-residue polypeptide: Cytochrome P450 72A13 (512 aa).

The chain crosses the membrane as a helical span at residues 2 to 22; that stretch reads EISVASVTVSVAVVVVSWWVW. Cys460 is a binding site for heme.

The protein belongs to the cytochrome P450 family. It depends on heme as a cofactor.

The protein resides in the membrane. This Arabidopsis thaliana (Mouse-ear cress) protein is Cytochrome P450 72A13 (CYP72A13).